The sequence spans 96 residues: Co-chaperonin GroES (96 aa).

It belongs to the GroES chaperonin family. Heptamer of 7 subunits arranged in a ring. Interacts with the chaperonin GroEL.

It is found in the cytoplasm. Functionally, together with the chaperonin GroEL, plays an essential role in assisting protein folding. The GroEL-GroES system forms a nano-cage that allows encapsulation of the non-native substrate proteins and provides a physical environment optimized to promote and accelerate protein folding. GroES binds to the apical surface of the GroEL ring, thereby capping the opening of the GroEL channel. The sequence is that of Co-chaperonin GroES from Nitrosospira multiformis (strain ATCC 25196 / NCIMB 11849 / C 71).